A 309-amino-acid polypeptide reads, in one-letter code: MFCDVQATEPDVKVSLTRVGITNLKKLIKITRESKRPIILLPTFEVFVDLPSSQKGIHMSRSPEVIEEIIESMVDNEVYGIEELSVDIIKKLFEKHEYATRAEVLMYGEYMMEEESPITKRSSQEICKIMSKAHGTKDGNNNIIIKKMVGAEVVGITACPCAQNLLKEKAIKKLKEKGFSDEDIKNILDSVSIATHNQRGIGTIMIEVPDGYEVGISKIINIIKKSMSGEVYELLKRVDEGYVVEEAHKNPKFVEDCAREMIRRVVGEFNYLPDDTEVLVRQVNKESIHRHDAFAERSSTLGELRNELK.

It belongs to the GTP cyclohydrolase IV family. As to quaternary structure, homodimer. It depends on Fe(2+) as a cofactor.

It carries out the reaction GTP + H2O = 7,8-dihydroneopterin 2',3'-cyclic phosphate + formate + diphosphate + H(+). The protein operates within cofactor biosynthesis; 5,6,7,8-tetrahydromethanopterin biosynthesis. Functionally, converts GTP to 7,8-dihydro-D-neopterin 2',3'-cyclic phosphate, the first intermediate in the biosynthesis of coenzyme methanopterin. The protein is GTP cyclohydrolase MptA of Methanococcus aeolicus (strain ATCC BAA-1280 / DSM 17508 / OCM 812 / Nankai-3).